Here is a 193-residue protein sequence, read N- to C-terminus: Thymidine kinase (193 aa).

ATP is bound by residues 14–21 (GCMFSGKT) and 87–90 (DELH). Glutamate 88 (proton acceptor) is an active-site residue. Zn(2+) contacts are provided by cysteine 147, cysteine 150, cysteine 185, and cysteine 188.

It belongs to the thymidine kinase family. Homotetramer.

Its subcellular location is the cytoplasm. It catalyses the reaction thymidine + ATP = dTMP + ADP + H(+). This is Thymidine kinase from Roseiflexus sp. (strain RS-1).